A 458-amino-acid polypeptide reads, in one-letter code: MRNYPAEPYKVKAVEPIAMTTREQREAYMKKAGYNTFLLNSEEVYIDLLTDSGTSAMSDKQWAGLMIGDEAYAGSRNFMHLQDVVREYYGFKYVVPTHQGRGAENLLSTIMIKPGDYVPGNMYFTTTRAHQERNGATFVDIIIDEAHDSQIDLPFKGNVDVKKLQKLIDEVGADKIPYICLAVTVNLAGGQPVSMANMREVKALCSKHGIKVMFDATRCVENAYFIKEREAEYKDATIKDILKEMMSYADGCTMSGKKDCLVNIGGFLCINDDDLYQQACELVVLFEGMPSYGGLAGRDMEAMAIGITESVDFHYIQHRVAQCYYLADKLEAAGVPIVKPVGGHAVFLDAKKFLPHIPQEQFPAQMLAAQIYIEGGVRSMERGIVSAGRDKKTGANHTPKLELVRLTIPRRVYTYAHLDHVADTIIKLFKHRDDIKGLDMVYEPKLLRFFTARFEPKA.

N6-(pyridoxal phosphate)lysine is present on Lys-258.

This sequence belongs to the beta-eliminating lyase family. As to quaternary structure, homotetramer. The cofactor is pyridoxal 5'-phosphate.

The enzyme catalyses L-tyrosine + H2O = phenol + pyruvate + NH4(+). This chain is Tyrosine phenol-lyase (tpl), found in Pasteurella multocida (strain Pm70).